Here is a 276-residue protein sequence, read N- to C-terminus: Halorhodopsin (276 aa).

Positions 1 to 21 (MTAASTTATTMLQATQSDVLQ) are excised as a propeptide. Residues 22–25 (EIQS) are Extracellular-facing. Residues 26 to 51 (NFLLNSSIWVNIALAGVVILLFVAMG) form a helical membrane-spanning segment. The Cytoplasmic segment spans residues 52-57 (RDIESP). The helical transmembrane segment at 58–81 (RAKLIWVATMLVPLVSISSYAGLA) threads the bilayer. The Extracellular segment spans residues 82 to 105 (SGLTVGFLQMPPGHALAGQEVLSP). A helical membrane pass occupies residues 106-127 (WGRYLTWTFSTPMILLALGLLA). The Cytoplasmic segment spans residues 128 to 130 (DTD). Residues 131-154 (IASLFTAITMDIGMCVTGLAAALI) traverse the membrane as a helical segment. The Extracellular portion of the chain corresponds to 155–157 (TSS). The helical transmembrane segment at 158–180 (HLLRWVFYGISCAFFVAVLYVLL) threads the bilayer. The Cytoplasmic segment spans residues 181 to 192 (VQWPADAEAAGT). Residues 193 to 216 (SEIFGTLKILTVVLWLGYPILWAL) traverse the membrane as a helical segment. At 217-225 (GSEGVALLS) the chain is on the extracellular side. Residues 226–254 (VGVTSWGYSGLDILAKYVFAFLLLRWVAA) traverse the membrane as a helical segment. K241 is subject to N6-(retinylidene)lysine. The Cytoplasmic portion of the chain corresponds to 255-276 (NEGAVSGSGMSIGSGGAAPADD).

It belongs to the archaeal/bacterial/fungal opsin family.

It is found in the cell membrane. Functionally, light-driven chloride pump. This Halobacterium halobium (strain port) protein is Halorhodopsin (hop).